The primary structure comprises 162 residues: MKILKPYMRNTSISCYLCFLLNSHFLTEAGIHVFILGCVSVGLPKTEANWIDVRYDLEKIESLIQSIHIDTTLYTDSDFHPSCKVTAMNCFLLELQVILHEYSNMTLNETVRNVLYLANSTLSSNKNVAESGCKECEELEEKTFTEFLQSFIRIVQMFINTS.

Positions 1–29 (MKILKPYMRNTSISCYLCFLLNSHFLTEA) are cleaved as a signal peptide. The propeptide occupies 30 to 48 (GIHVFILGCVSVGLPKTEA). 2 disulfide bridges follow: Cys-83–Cys-133 and Cys-90–Cys-136. 3 N-linked (GlcNAc...) asparagine glycosylation sites follow: Asn-104, Asn-108, and Asn-119.

It belongs to the IL-15/IL-21 family.

Its subcellular location is the secreted. Its function is as follows. Cytokine that plays a major role in the development of inflammatory and protective immune responses to microbial invaders and parasites by modulating immune cells of both the innate and adaptive immune systems. Stimulates the proliferation and activation of natural killer cells, T-cells and B-cells and promotes the secretion of several cytokines. In monocytes, induces the production of IL8 and monocyte chemotactic protein 1/CCL2, two chemokines that attract neutrophils and monocytes respectively to sites of infection. Unlike most cytokines, which are secreted in soluble form, IL15 is expressed in association with its high affinity IL15RA on the surface of IL15-producing cells and delivers signals to target cells that express IL2RB and IL2RG receptor subunits. Binding to its receptor triggers the phosphorylation of JAK1 and JAK3 and the recruitment and subsequent phosphorylation of signal transducer and activator of transcription-3/STAT3 and STAT5. In mast cells, induces the rapid tyrosine phosphorylation of STAT6 and thereby controls mast cell survival and release of cytokines such as IL4. The polypeptide is Interleukin-15 (Il15) (Mus musculus (Mouse)).